The chain runs to 320 residues: Ferrochelatase (320 aa).

Fe cation contacts are provided by His-194 and Glu-275.

The protein belongs to the ferrochelatase family. In terms of assembly, monomer.

The protein localises to the cytoplasm. It catalyses the reaction heme b + 2 H(+) = protoporphyrin IX + Fe(2+). It functions in the pathway porphyrin-containing compound metabolism; protoheme biosynthesis; protoheme from protoporphyrin-IX: step 1/1. Its function is as follows. Catalyzes the ferrous insertion into protoporphyrin IX. This chain is Ferrochelatase, found in Escherichia coli (strain SMS-3-5 / SECEC).